Here is a 1188-residue protein sequence, read N- to C-terminus: Adenomatous polyposis coli protein-related protein 1 (1188 aa).

The interval 1–50 (MSSSSSDENETTIHRTGSNTGGSGIYSQPRAGSSKRTSNVRHDVSDVDDE) is disordered. Residues 1–486 (MSSSSSDENE…LSLRATRASP (486 aa)) form a required for interaction with bar-1 and hmp-2 region. An ARM repeat occupies 314–358 (NCLKVLASLLSPDARFTSLVDSATGILKYVSQYLANTSTHLELRS). Residues 579–588 (IQQQQQMQKA) show a composition bias toward low complexity. Disordered regions lie at residues 579–624 (IQQQ…SMNP), 670–702 (TESE…DGAT), 726–751 (TPNG…GPSL), 778–952 (QSEM…TMRF), 1003–1092 (CSMI…LKDK), and 1157–1181 (YQKP…PNPK). Residues 600 to 1188 (DLDIPTSTVM…NPKQMLVTIV (589 aa)) are required for interaction with pry-1. Polar residues-rich tracts occupy residues 604 to 624 (PTST…SMNP) and 677 to 701 (LTSQ…SDGA). 2 stretches are compositionally biased toward polar residues: residues 778-788 (QSEMPTSSSTP) and 800-811 (FSPTQKTTSSPA). 2 stretches are compositionally biased toward basic and acidic residues: residues 832-843 (RRQDASDADRLL) and 871-900 (EPER…DHNG). Composition is skewed to polar residues over residues 909-929 (WSPQ…SSED), 937-946 (EPNSSTSGAA), 1014-1039 (QRNE…SASS), and 1164-1180 (GRNN…TPNP).

Belongs to the adenomatous polyposis coli (APC) family. Interacts (via N-terminus) with bar-1 and hmp-2; the interaction with hmp-2 is relatively weak. Interacts (via C-terminus) with pry-1 (via N-terminus). Probably associates with bar-1, gsk-3, pry-1 in a complex. In terms of tissue distribution, during the L1 stage, expressed in vulval precursor cells (P3-8.p), seam cells and excretory cells.

It is found in the cell junction. The protein resides in the adherens junction. The protein localises to the cytoplasm. It localises to the nucleus. Has a role in endoderm cell specification and pharyngeal development. Required for the migration of epithelial cells, organization of the anterior seam cells and ceh-13 expression during embryo morphogenesis. Prevents hyperactivation of the Wnt signaling pathway during endoderm development, probably by preventing hmp-2 nuclear translocation. During larval development, apr-1 is required for expression of lin-39 in P3-8.p. Shown to negatively regulate Wnt signaling in vulval precursor cells. Has a role in cell division by establishing the polarity of the mother cell which forms the asymmetries of the daughter nuclei. During the L4 larval stage, it is required for the asymmetric division and self-renewal of seam cells. Thought to regulate export of wrm-1 from the nucleus possibly as part of a complex involving pry-1. In Caenorhabditis elegans, this protein is Adenomatous polyposis coli protein-related protein 1.